The sequence spans 304 residues: Small ribosomal subunit biogenesis GTPase RsgA (304 aa).

A CP-type G domain is found at 78–237; sequence HSFLTRPPVA…VADTPGFNRP (160 aa). GTP is bound by residues 127-130 and 179-187; these read TKTD and GPSGVGKSS. Positions 262, 267, 269, and 275 each coordinate Zn(2+).

The protein belongs to the TRAFAC class YlqF/YawG GTPase family. RsgA subfamily. Monomer. Associates with 30S ribosomal subunit, binds 16S rRNA. Requires Zn(2+) as cofactor.

It localises to the cytoplasm. Its function is as follows. One of several proteins that assist in the late maturation steps of the functional core of the 30S ribosomal subunit. Helps release RbfA from mature subunits. May play a role in the assembly of ribosomal proteins into the subunit. Circularly permuted GTPase that catalyzes slow GTP hydrolysis, GTPase activity is stimulated by the 30S ribosomal subunit. This is Small ribosomal subunit biogenesis GTPase RsgA from Synechococcus sp. (strain CC9605).